The chain runs to 312 residues: Lipoyl synthase (312 aa).

Residues 1 to 10 (MNEAPAEKQK) show a composition bias toward basic and acidic residues. The segment at 1–20 (MNEAPAEKQKPQQGKRFSER) is disordered. Cys-51, Cys-56, Cys-62, Cys-77, Cys-81, Cys-84, and Ser-290 together coordinate [4Fe-4S] cluster. In terms of domain architecture, Radical SAM core spans 63 to 280 (WSRKTATYLA…RSVGESLGLF (218 aa)).

This sequence belongs to the radical SAM superfamily. Lipoyl synthase family. It depends on [4Fe-4S] cluster as a cofactor.

The protein localises to the cytoplasm. It carries out the reaction [[Fe-S] cluster scaffold protein carrying a second [4Fe-4S](2+) cluster] + N(6)-octanoyl-L-lysyl-[protein] + 2 oxidized [2Fe-2S]-[ferredoxin] + 2 S-adenosyl-L-methionine + 4 H(+) = [[Fe-S] cluster scaffold protein] + N(6)-[(R)-dihydrolipoyl]-L-lysyl-[protein] + 4 Fe(3+) + 2 hydrogen sulfide + 2 5'-deoxyadenosine + 2 L-methionine + 2 reduced [2Fe-2S]-[ferredoxin]. It functions in the pathway protein modification; protein lipoylation via endogenous pathway; protein N(6)-(lipoyl)lysine from octanoyl-[acyl-carrier-protein]: step 2/2. In terms of biological role, catalyzes the radical-mediated insertion of two sulfur atoms into the C-6 and C-8 positions of the octanoyl moiety bound to the lipoyl domains of lipoate-dependent enzymes, thereby converting the octanoylated domains into lipoylated derivatives. This chain is Lipoyl synthase, found in Chlamydia felis (strain Fe/C-56) (Chlamydophila felis).